The primary structure comprises 1150 residues: uncharacterized protein (1150 aa).

It belongs to the TMEM1 family.

This is an uncharacterized protein from Schizosaccharomyces pombe (strain 972 / ATCC 24843) (Fission yeast).